The sequence spans 144 residues: Endoribonuclease YbeY (144 aa).

His-105, His-109, and Asp-115 together coordinate Zn(2+).

Belongs to the endoribonuclease YbeY family. Requires Zn(2+) as cofactor.

It localises to the cytoplasm. Its function is as follows. Single strand-specific metallo-endoribonuclease involved in late-stage 70S ribosome quality control and in maturation of the 3' terminus of the 16S rRNA. The sequence is that of Endoribonuclease YbeY from Chlorobium limicola (strain DSM 245 / NBRC 103803 / 6330).